The sequence spans 336 residues: Anthranilate phosphoribosyltransferase (336 aa).

Residues Gly-82, 85-86 (GD), Thr-90, 92-95 (NVST), 110-118 (KHGNRSVSS), and Ser-122 each bind 5-phospho-alpha-D-ribose 1-diphosphate. An anthranilate-binding site is contributed by Gly-82. Position 94 (Ser-94) interacts with Mg(2+). Residue Asn-113 participates in anthranilate binding. Arg-168 provides a ligand contact to anthranilate. Residues Asp-227 and Glu-228 each coordinate Mg(2+).

The protein belongs to the anthranilate phosphoribosyltransferase family. Homodimer. Mg(2+) serves as cofactor.

The catalysed reaction is N-(5-phospho-beta-D-ribosyl)anthranilate + diphosphate = 5-phospho-alpha-D-ribose 1-diphosphate + anthranilate. The protein operates within amino-acid biosynthesis; L-tryptophan biosynthesis; L-tryptophan from chorismate: step 2/5. Catalyzes the transfer of the phosphoribosyl group of 5-phosphorylribose-1-pyrophosphate (PRPP) to anthranilate to yield N-(5'-phosphoribosyl)-anthranilate (PRA). The sequence is that of Anthranilate phosphoribosyltransferase from Leptospira borgpetersenii serovar Hardjo-bovis (strain JB197).